Reading from the N-terminus, the 428-residue chain is Putative zinc metalloprotease SAS1196 (428 aa).

His21 contributes to the Zn(2+) binding site. The active site involves Glu22. His25 provides a ligand contact to Zn(2+). Helical transmembrane passes span 172–194 (FLTL…IGLA), 309–331 (GSTL…GFSF), 352–374 (IISL…LIPI), and 401–420 (TTII…LVTW). Positions 186–269 (ALVLFIGLAY…TKSVELTPKK (84 aa)) constitute a PDZ domain.

Belongs to the peptidase M50B family. Zn(2+) serves as cofactor.

Its subcellular location is the cell membrane. The sequence is that of Putative zinc metalloprotease SAS1196 from Staphylococcus aureus (strain MSSA476).